The following is a 410-amino-acid chain: Transcription factor SPN1 (410 aa).

The segment at 1-132 is disordered; it reads MSTADQEQPK…SRQELEEKLD (132 aa). Residue Thr15 is modified to Phosphothreonine. Residues 20–52 are compositionally biased toward polar residues; sequence TASSQKSTINAENENTKQNQSMEPQETSKGTSN. The residue at position 23 (Ser23) is a Phosphoserine; by ATM or ATR. Ser40 carries the post-translational modification Phosphoserine. The span at 53-65 shows a compositional bias: basic and acidic residues; the sequence is DTKDPDNGEKNEE. A Phosphoserine modification is found at Ser85. Thr86 carries the post-translational modification Phosphothreonine. Ser89 carries the phosphoserine modification. The region spanning 219–296 is the TFIIS N-terminal domain; it reads QSVRIWLEPL…AEWTRPIIGA (78 aa). The segment at 318–346 is disordered; that stretch reads KSVMDSAKNRKKKSKSGEDPTSRGSSVQT.

It belongs to the IWS1 family. In terms of assembly, interacts with ABD1, RBP1, SPT5 and SPT6.

It is found in the nucleus. Transcription factor involved in RNA polymerase II transcription regulation. May function in both SPT15/TBP post-recruitment and recruitment steps of transcription. The sequence is that of Transcription factor SPN1 (SPN1) from Saccharomyces cerevisiae (strain ATCC 204508 / S288c) (Baker's yeast).